Here is a 299-residue protein sequence, read N- to C-terminus: Sulfotransferase 1B1 (299 aa).

48-53 contributes to the 3'-phosphoadenylyl sulfate binding site; that stretch reads KSGTTW. 107–109 provides a ligand contact to substrate; sequence KTH. The Proton acceptor role is filled by His109. 3'-phosphoadenylyl sulfate-binding positions include Arg131, Ser139, Tyr194, 228 to 233, and 258 to 260; these read TSFEMM and RKG.

The protein belongs to the sulfotransferase 1 family. In terms of tissue distribution, liver specific.

The protein resides in the cytoplasm. It catalyses the reaction a phenol + 3'-phosphoadenylyl sulfate = an aryl sulfate + adenosine 3',5'-bisphosphate + H(+). The enzyme catalyses 3,3',5-triiodo-L-thyronine + 3'-phosphoadenylyl sulfate = 3,3',5-triiodo-L-thyronine sulfate + adenosine 3',5'-bisphosphate + H(+). The catalysed reaction is 3,3',5'-triiodo-L-thyronine + 3'-phosphoadenylyl sulfate = 3,3',5'-triiodo-L-thyronine sulfate + adenosine 3',5'-bisphosphate + H(+). It carries out the reaction 3,3'-diiodo-L-thyronine + 3'-phosphoadenylyl sulfate = 3,3'-diiodo-L-thyronine sulfate + adenosine 3',5'-bisphosphate + H(+). It catalyses the reaction dopamine + 3'-phosphoadenylyl sulfate = dopamine 3-O-sulfate + adenosine 3',5'-bisphosphate + H(+). The enzyme catalyses dopamine + 3'-phosphoadenylyl sulfate = dopamine 4-O-sulfate + adenosine 3',5'-bisphosphate + H(+). The catalysed reaction is 4-ethylphenol + 3'-phosphoadenylyl sulfate = 4-ethylphenyl sulfate + adenosine 3',5'-bisphosphate + H(+). Its function is as follows. Sulfotransferase that utilizes 3'-phospho-5'-adenylyl sulfate (PAPS) as sulfonate donor to catalyze the sulfate conjugation of dopamine, small phenols such as 1-naphthol and p-nitrophenol and thyroid hormones, including 3,3'-diiodothyronine, triidothyronine (T3) and reverse triiodothyronine (rT3). May play a role in gut microbiota-host metabolic interaction. O-sulfonates 4-ethylphenol (4-EP), a dietary tyrosine-derived metabolite produced by gut bacteria. The product 4-EPS crosses the blood-brain barrier and may negatively regulate oligodendrocyte maturation and myelination, affecting the functional connectivity of different brain regions associated with the limbic system. The chain is Sulfotransferase 1B1 from Mus musculus (Mouse).